The primary structure comprises 835 residues: BCL11 transcription factor A (835 aa).

Positions 1–12 are enriched in basic residues; it reads MSRRKQGKPQHL. A disordered region spans residues 1–41; that stretch reads MSRRKQGKPQHLSKREFSPEPLEAILTDDEPDHGPLGAPEG. Residues 1–210 form a required for nuclear body formation and for SUMO1 recruitment region; the sequence is MSRRKQGKPQ…SEHGSPLTPR (210 aa). The segment at 45–71 adopts a C2HC-type zinc-finger fold; the sequence is LLTCGQCQMNFPLGDILIFIEHKRKQC. Residues C48, C51, H66, and C71 each coordinate Zn(2+). A Phosphoserine modification is found at S86. Residues K123 and K164 each participate in a glycyl lysine isopeptide (Lys-Gly) (interchain with G-Cter in SUMO2) cross-link. Residues 170–193 form a C2H2-type 1 zinc finger; that stretch reads YTCTTCKQPFTSAWFLLQHAQNTH. Residue S205 is modified to Phosphoserine. R271 bears the Asymmetric dimethylarginine mark. Positions 323 to 376 are disordered; the sequence is AGNTSSPPLSPGRPSPMQRLLQPFQPGSKPPFLATPPLPPLQSAPPPSQPPVKS. Phosphoserine is present on residues S332 and S337. The segment covering 355–372 has biased composition (pro residues); the sequence is LATPPLPPLQSAPPPSQP. 2 C2H2-type zinc fingers span residues 377-399 and 405-429; these read KSCE…RRSH and YKCN…THMH. Basic residues predominate over residues 421-430; sequence KRHMKTHMHK. 3 disordered regions span residues 421 to 458, 471 to 512, and 572 to 619; these read KRHM…LVGS, KSEN…ERVD, and RGHL…GLSK. The segment covering 441 to 450 has biased composition (polar residues); that stretch reads GLSTASSPEP. Phosphoserine occurs at positions 446 and 447. The segment covering 482–506 has biased composition (acidic residues); sequence NGDEEEEEDDEEEEEEEEEEEEELT. Residues 574–584 are compositionally biased toward basic and acidic residues; the sequence is HLAEAEGHRDT. At S608 the chain carries Phosphoserine. K620 participates in a covalent cross-link: Glycyl lysine isopeptide (Lys-Gly) (interchain with G-Cter in SUMO2). A phosphoserine mark is found at S625 and S630. A Glycyl lysine isopeptide (Lys-Gly) (interchain with G-Cter in SUMO1) cross-link involves residue K634. The disordered stretch occupies residues 678–740; it reads DSRQSPFASS…GRPSSKEGRR (63 aa). A compositionally biased stretch (low complexity) spans 682 to 696; sequence SPFASSSEHSSENGS. T701 is modified (phosphothreonine). Residues 706-720 are compositionally biased toward gly residues; it reads LDGGISGRSGTGSGG. The segment at 737 to 835 is DNA-binding; it reads EGRRSDTCEY…RVLNNDIKTE (99 aa). A C2H2-type 4 zinc finger spans residues 742–764; the sequence is DTCEYCGKVFKNCSNLTVHRRSH. The Zn(2+) site is built by C744, C747, H760, and H764. The interval 765 to 769 is disordered; it reads TGERP. Residues 770 to 792 form a C2H2-type 5 zinc finger; that stretch reads YKCELCNYACAQSSKLTRHMKTH. Positions 772, 775, 788, and 792 each coordinate Zn(2+). The segment at 793-799 is disordered; it reads GQVGKDV. The C2H2-type 6 zinc finger occupies 800 to 823; sequence YKCEICKMPFSVYSTLEKHMKKWH. Residues C802, C805, H818, and H823 each contribute to the Zn(2+) site. A Glycyl lysine isopeptide (Lys-Gly) (interchain with G-Cter in SUMO2) cross-link involves residue K833.

In terms of assembly, homotetrameric; self-associates via C2HC-type zinc finger domain. Interacts with MTA2, a component of the nucleosome remodeling and deacetylase (NuRD) repressor complex. Interacts (via its C2H2-type zinc finger domains 4, 5 and 6) with promoter region of gamma-globulin. Interacts with NR2F1, PIAS3, NR2F2 and NR2F6. Isoform 1, isoform 2 and isoform 3 form homodimers and heterodimers. Isoform 2 interacts with TBR1. Post-translationally, sumoylated with SUMO1. In terms of tissue distribution, expressed at high levels in brain, spleen thymus, bone marrow and testis. Expressed in CD34-positive myeloid precursor cells, B-cells, monocytes and megakaryocytes. Expression is tightly regulated during B-cell development. Expressed in fetal and adult brain, and in the plasmacytoid dendritic cell.

It localises to the cytoplasm. Its subcellular location is the nucleus. It is found in the chromosome. The protein localises to the nucleus matrix. Its function is as follows. Transcription factor. Associated with the BAF SWI/SNF chromatin remodeling complex. Binds to the 5'-TGACCA-3' sequence motif in regulatory regions of target genes, including a distal promoter of the HBG1 hemoglobin subunit gamma-1 gene. Involved in regulation of the developmental switch from gamma- to beta-globin, probably via direct repression of HBG1; hence indirectly repressing fetal hemoglobin (HbF) level. Involved in brain development. May play a role in hematopoiesis. Essential factor in lymphopoiesis required for B-cell formation in fetal liver. May function as a modulator of the transcriptional repression activity of NR2F2. This is BCL11 transcription factor A (BCL11A) from Homo sapiens (Human).